Here is a 397-residue protein sequence, read N- to C-terminus: Acetate kinase (397 aa).

Position 8 (N8) interacts with Mg(2+). K15 lines the ATP pocket. R89 contributes to the substrate binding site. D146 (proton donor/acceptor) is an active-site residue. ATP contacts are provided by residues H206–G210, D281–R283, and G328–N332. E381 contributes to the Mg(2+) binding site.

This sequence belongs to the acetokinase family. As to quaternary structure, homodimer. Mg(2+) serves as cofactor. The cofactor is Mn(2+).

It is found in the cytoplasm. It catalyses the reaction acetate + ATP = acetyl phosphate + ADP. The protein operates within metabolic intermediate biosynthesis; acetyl-CoA biosynthesis; acetyl-CoA from acetate: step 1/2. Catalyzes the formation of acetyl phosphate from acetate and ATP. Can also catalyze the reverse reaction. This chain is Acetate kinase, found in Oceanobacillus iheyensis (strain DSM 14371 / CIP 107618 / JCM 11309 / KCTC 3954 / HTE831).